The chain runs to 146 residues: Large ribosomal subunit protein uL15 (146 aa).

The segment at methionine 1–valine 46 is disordered. Gly residues predominate over residues arginine 21–alanine 31.

It belongs to the universal ribosomal protein uL15 family. As to quaternary structure, part of the 50S ribosomal subunit.

Functionally, binds to the 23S rRNA. In Geobacillus thermodenitrificans (strain NG80-2), this protein is Large ribosomal subunit protein uL15.